A 369-amino-acid polypeptide reads, in one-letter code: Somatostatin receptor type 2 (369 aa).

Residues 1–43 (MDMAYELLNGSQPWLSSPFDLNGSVATANSSNQTEPYYDLTSN) are Extracellular-facing. Residues N9, N22, N29, and N32 are each glycosylated (N-linked (GlcNAc...) asparagine). Residues 44-67 (AVLTFIYFVVCIIGLCGNTLVIYV) traverse the membrane as a helical segment. The Cytoplasmic segment spans residues 68 to 78 (ILRYAKMKTIT). The chain crosses the membrane as a helical span at residues 79–103 (NIYILNLAIADELFMLGLPFLAMQV). Topologically, residues 104–118 (ALVHWPFGKAICRVV) are extracellular. Residues C115 and C193 are joined by a disulfide bond. Residues 119–138 (MTVDGINQFTSIFCLTVMSI) form a helical membrane-spanning segment. Over 139–161 (DRYLAVVHPIKSAKWRRPRTAKM) the chain is Cytoplasmic. Residues 162-181 (INVAVWGVSLLVILPIMIYA) form a helical membrane-spanning segment. The Extracellular segment spans residues 182-207 (GLRSNQWGRSSCTINWPGESGAWYTG). The helical transmembrane segment at 208–229 (FIIYAFILGFLVPLTIICLCYL) threads the bilayer. Topologically, residues 230–253 (FIIIKVKSSGIRVGSSKRKKSEKK) are cytoplasmic. A helical membrane pass occupies residues 254 to 278 (VTRMVSIVVAVFIFCWLPFYIFNVS). Over 279-288 (SVSVAISPTP) the chain is Extracellular. A helical transmembrane segment spans residues 289–303 (ALKGMFDFVVVLTYA). The Cytoplasmic portion of the chain corresponds to 304-369 (NSCANPILYA…LLNGDLQTSI (66 aa)). A lipid anchor (S-palmitoyl cysteine) is attached at C328. Residues S341, S343, and S348 each carry the phosphoserine modification. 2 positions are modified to phosphothreonine: T353 and T354.

Belongs to the G-protein coupled receptor 1 family. In terms of assembly, homodimer and heterodimer with SSTR3 and SSTR5. Heterodimerization with SSTR3 inactivates SSTR3 receptor function. Heterodimerization with SSTR5 is enhanced by agonist stimulation of SSTR2 and increases SSTR2 cell growth inhibition activity. Following agonist stimulation, homodimers dissociate into monomers which is required for receptor internalization. Interacts with beta-arrestin; this interaction is necessary for receptor internalization and is destabilized by heterodimerization with SSTR5 which results in increased recycling of SSTR2 to the cell surface. Interacts (via C-terminus) with SHANK1 (via PDZ domain). Phosphorylated on serine and threonine residues in response to agonist stimulation, leading to receptor desensitization and rapid internalization. Phosphorylated to a greater extent on serine than threonine residues. Threonine phosphorylation is required for arrestin binding and receptor endocytosis but is not necessary for desensitization.

It localises to the cell membrane. The protein localises to the cytoplasm. Receptor for somatostatin-14 and -28. This receptor is coupled via pertussis toxin sensitive G proteins to inhibition of adenylyl cyclase. In addition it stimulates phosphotyrosine phosphatase and PLC via pertussis toxin insensitive as well as sensitive G proteins. Inhibits calcium entry by suppressing voltage-dependent calcium channels. Acts as the functionally dominant somatostatin receptor in pancreatic alpha- and beta-cells where it mediates the inhibitory effect of somatostatin-14 on hormone secretion. Inhibits cell growth through enhancement of MAPK1 and MAPK2 phosphorylation and subsequent up-regulation of CDKN1B. Stimulates neuronal migration and axon outgrowth and may participate in neuron development and maturation during brain development. Mediates negative regulation of insulin receptor signaling through PTPN6. Inactivates SSTR3 receptor function following heterodimerization. In Sus scrofa (Pig), this protein is Somatostatin receptor type 2 (SSTR2).